The chain runs to 354 residues: Abasic site processing protein HMCES (354 aa).

Cys-2 serves as the catalytic Nucleophile. Cys-2 is subject to Thiazolidine linkage to a ring-opened DNA abasic site. Glu-127 is an active-site residue. Glycyl lysine isopeptide (Lys-Gly) (interchain with G-Cter in SUMO2) cross-links involve residues Lys-148 and Lys-151. Phosphoserine is present on Ser-160. Lys-276 is covalently cross-linked (Glycyl lysine isopeptide (Lys-Gly) (interchain with G-Cter in SUMO2)). The segment at 292-354 (ATKSPKKEDS…EPVAKRPYSQ (63 aa)) is disordered. Ser-295 carries the phosphoserine modification. The segment covering 296 to 309 (PKKEDSKTPQKEES) has biased composition (basic and acidic residues). A Glycyl lysine isopeptide (Lys-Gly) (interchain with G-Cter in SUMO2) cross-link involves residue Lys-306. Phosphoserine is present on Ser-322. The PIP-box signature appears at 332–338 (GLLEQWL). Residues 337–348 (WLKREKEEEPVA) show a composition bias toward basic and acidic residues. Residues Lys-339 and Lys-342 each participate in a glycyl lysine isopeptide (Lys-Gly) (interchain with G-Cter in SUMO2) cross-link.

This sequence belongs to the SOS response-associated peptidase family. As to quaternary structure, interacts (via PIP-box motif) with PCNA. In terms of processing, ubiquitinated; the covalent HMCES DNA-protein cross-link is ubiquitinated, leading to its degradation by the proteasome.

The protein resides in the chromosome. With respect to regulation, formation and reversal of DNA-protein cross-link depends on DNA context. Catalyzes formation of the thiazolidine linkage in presence of abasic sites in single-stranded DNA. Mediates the reversal of the thiazolidine cross-link in presence of double stranded DNA. Functionally, sensor of abasic sites in single-stranded DNA (ssDNA) required to preserve genome integrity by promoting error-free repair of abasic sites. Acts as an enzyme that recognizes and binds abasic sites in ssDNA at replication forks and chemically modifies the lesion by forming a covalent cross-link with DNA: forms a stable thiazolidine linkage between a ring-opened abasic site and the alpha-amino and sulfhydryl substituents of its N-terminal catalytic cysteine residue. Promotes error-free repair by protecting abasic sites from translesion synthesis (TLS) polymerases and endonucleases that are error-prone and would generate mutations and double-strand breaks. The HMCES DNA-protein cross-link is then either reversed or degraded. HMCES is able to catalyze the reversal of its thiazolidine cross-link and cycle between a cross-link and a non-cross-linked state depending on DNA context: mediates self-reversal of the thiazolidine cross-link in double stranded DNA, allowing APEX1 to initiate downstream repair of abasic sites. The HMCES DNA-protein cross-link can also be degraded by the SPRTN metalloprotease following unfolding by the BRIP1/FANCJ helicase. Has preference for ssDNA, but can also accommodate double-stranded DNA with 3' or 5' overhang (dsDNA), and dsDNA-ssDNA 3' junction. Plays a protective role during somatic hypermutation of immunoglobulin genes in B-cells: acts via its ability to form covalent cross-links with abasic sites, thereby limiting the accumulation of deletions in somatic hypermutation target regions. Also involved in class switch recombination (CSR) in B-cells independently of the formation of a DNA-protein cross-link: acts by binding and protecting ssDNA overhangs to promote DNA double-strand break repair through the microhomology-mediated alternative-end-joining (Alt-EJ) pathway. Acts as a protease: mediates autocatalytic processing of its N-terminal methionine in order to expose the catalytic cysteine. The sequence is that of Abasic site processing protein HMCES from Pongo abelii (Sumatran orangutan).